A 215-amino-acid chain; its full sequence is Sodium channel regulatory subunit beta-2 (215 aa).

The signal sequence occupies residues 1 to 29 (MHRDAWLPRPAFSLTGLSLFFSLVPPGRS). Over 30 to 157 (MEVTVPATLN…MEEPPERDST (128 aa)) the chain is Extracellular. The region spanning 32–154 (VTVPATLNVL…QVLMEEPPER (123 aa)) is the Ig-like C2-type domain. N-linked (GlcNAc...) asparagine glycans are attached at residues Asn42, Asn66, and Asn74. 2 cysteine pairs are disulfide-bonded: Cys50/Cys127 and Cys72/Cys75. The chain crosses the membrane as a helical span at residues 158-179 (VAVIVGASVGGFLAVVILVLMV). Residues 180 to 215 (VKCVRRKKEQKLSTDDLKTEEEGKTDGEGNPDDGAK) lie on the Cytoplasmic side of the membrane. Residues 187–215 (KEQKLSTDDLKTEEEGKTDGEGNPDDGAK) form a disordered region. Residues 189 to 215 (QKLSTDDLKTEEEGKTDGEGNPDDGAK) show a composition bias toward basic and acidic residues. Phosphoserine is present on Ser192. Residue Thr204 is modified to Phosphothreonine.

Belongs to the sodium channel auxiliary subunit SCN2B (TC 8.A.17) family. As to quaternary structure, a voltage-gated sodium (Nav) channel consists of an ion-conducting pore-forming alpha subunit functional on its own that is regulated by one or more beta subunits. The beta subunit SCN2B is disulfide-linked to the pore-forming alpha subunit. Interacts with SCN1A; regulatory subunit of SCN1A/Nav1.1. Interacts with SCN2A; regulatory subunit of SCN2A/Nav1.2. Interacts with SCN3A; regulatory subunit of SCN3A/Nav1.3. Interacts with SCN5A; regulatory subunit of SCN5A/Nav1.5. Interacts with SCN8A; regulatory subunit of SCN8A/Nav1.6. Interacts with SCN9A; regulatory subunit of SCN9A/Nav1.7. Interacts with SCN10A; regulatory subunit of SCN10A/Nav1.8. Interacts with TNR; may play a crucial role in clustering and regulation of activity of SCN2B-containing Nav channels at nodes of Ranvier.

The protein resides in the cell membrane. The protein localises to the cell projection. Its subcellular location is the axon. In terms of biological role, regulatory subunit of multiple voltage-gated sodium (Nav) channels directly mediating the depolarization of excitable membranes. Navs, also called VGSCs (voltage-gated sodium channels) or VDSCs (voltage-dependent sodium channels), operate by switching between closed and open conformations depending on the voltage difference across the membrane. In the open conformation they allow Na(+) ions to selectively pass through the pore, along their electrochemical gradient. The influx of Na+ ions provokes membrane depolarization, initiating the propagation of electrical signals throughout cells and tissues. The accessory beta subunits participate in localization and functional modulation of the Nav channels. Modulates the activity of SCN1A/Nav1.1, SCN2A/Nav1.2, SCN2A/Nav1.3, SCN5A/Nav1.5, SCN8A/Nav1.6, SCN9A/Nav1.7 and SCN10A/Nav1.8. The protein is Sodium channel regulatory subunit beta-2 of Homo sapiens (Human).